A 452-amino-acid chain; its full sequence is Probable ECA polymerase (452 aa).

11 helical membrane-spanning segments follow: residues 6–26 (FSGL…LTWF), 37–57 (VFFS…TSVL), 63–83 (VGVA…CFYG), 118–138 (VILM…NGFL), 155–175 (GVAL…VYFL), 181–201 (AWLF…MIVG), 207–227 (IIIA…ISLW), 228–248 (MLAA…LKRY), 341–361 (LVVM…GMII), 378–398 (YKAA…IVLA), and 410–430 (VFFL…FWLF).

Belongs to the WzyE family. In terms of assembly, probably part of a complex composed of WzxE, WzyE and WzzE.

It is found in the cell inner membrane. The protein operates within bacterial outer membrane biogenesis; enterobacterial common antigen biosynthesis. Its function is as follows. Probably involved in the polymerization of enterobacterial common antigen (ECA) trisaccharide repeat units. This chain is Probable ECA polymerase, found in Salmonella newport (strain SL254).